Here is a 32-residue protein sequence, read N- to C-terminus: Photosystem II reaction center protein T (32 aa).

A helical transmembrane segment spans residues 3-23 (SIAYVLIFACLIGLFFFAIFF).

This sequence belongs to the PsbT family. PSII is composed of 1 copy each of membrane proteins PsbA, PsbB, PsbC, PsbD, PsbE, PsbF, PsbH, PsbI, PsbJ, PsbK, PsbL, PsbM, PsbT, PsbX, PsbY, PsbZ, Psb30/Ycf12, peripheral proteins PsbO, CyanoQ (PsbQ), PsbU, PsbV and a large number of cofactors. It forms dimeric complexes.

Its subcellular location is the cellular thylakoid membrane. Found at the monomer-monomer interface of the photosystem II (PS II) dimer, plays a role in assembly and dimerization of PSII. PSII is a light-driven water plastoquinone oxidoreductase, using light energy to abstract electrons from H(2)O, generating a proton gradient subsequently used for ATP formation. The chain is Photosystem II reaction center protein T from Cyanothece sp. (strain PCC 7425 / ATCC 29141).